The following is a 360-amino-acid chain: UDP-N-acetylglucosamine--N-acetylmuramyl-(pentapeptide) pyrophosphoryl-undecaprenol N-acetylglucosamine transferase (360 aa).

Positions 198 and 289 each coordinate UDP-N-acetyl-alpha-D-glucosamine.

The protein belongs to the glycosyltransferase 28 family. MurG subfamily.

It localises to the cell membrane. It carries out the reaction Mur2Ac(oyl-L-Ala-gamma-D-Glu-L-Lys-D-Ala-D-Ala)-di-trans,octa-cis-undecaprenyl diphosphate + UDP-N-acetyl-alpha-D-glucosamine = beta-D-GlcNAc-(1-&gt;4)-Mur2Ac(oyl-L-Ala-gamma-D-Glu-L-Lys-D-Ala-D-Ala)-di-trans,octa-cis-undecaprenyl diphosphate + UDP + H(+). It participates in cell wall biogenesis; peptidoglycan biosynthesis. Cell wall formation. Catalyzes the transfer of a GlcNAc subunit on undecaprenyl-pyrophosphoryl-MurNAc-pentapeptide (lipid intermediate I) to form undecaprenyl-pyrophosphoryl-MurNAc-(pentapeptide)GlcNAc (lipid intermediate II). This is UDP-N-acetylglucosamine--N-acetylmuramyl-(pentapeptide) pyrophosphoryl-undecaprenol N-acetylglucosamine transferase from Streptococcus pyogenes serotype M49 (strain NZ131).